The sequence spans 236 residues: Small ribosomal subunit protein uS2c (236 aa).

The protein belongs to the universal ribosomal protein uS2 family.

Its subcellular location is the plastid. The protein localises to the chloroplast. The protein is Small ribosomal subunit protein uS2c (rps2) of Phalaenopsis aphrodite subsp. formosana (Moth orchid).